Consider the following 422-residue polypeptide: Adenylosuccinate synthetase (422 aa).

Residues 11 to 17 (GDEGKGK) and 39 to 41 (GHT) contribute to the GTP site. Asp-12 (proton acceptor) is an active-site residue. Mg(2+) is bound by residues Asp-12 and Gly-39. IMP is bound by residues 12–15 (DEGK), 37–40 (NAGH), Thr-129, Arg-143, Asn-219, Thr-234, and Arg-298. His-40 serves as the catalytic Proton donor. Residue 294–300 (VTTGRRR) participates in substrate binding. Residues Arg-300, 326–328 (KLD), and 409–411 (GTG) contribute to the GTP site.

The protein belongs to the adenylosuccinate synthetase family. In terms of assembly, homodimer. Mg(2+) serves as cofactor.

It is found in the cytoplasm. The catalysed reaction is IMP + L-aspartate + GTP = N(6)-(1,2-dicarboxyethyl)-AMP + GDP + phosphate + 2 H(+). It participates in purine metabolism; AMP biosynthesis via de novo pathway; AMP from IMP: step 1/2. Plays an important role in the de novo pathway and in the salvage pathway of purine nucleotide biosynthesis. Catalyzes the first committed step in the biosynthesis of AMP from IMP. The polypeptide is Adenylosuccinate synthetase (Ajellomyces capsulatus (strain NAm1 / WU24) (Darling's disease fungus)).